The sequence spans 241 residues: ATP synthase subunit a (241 aa).

8 consecutive transmembrane segments (helical) span residues 29–49, 54–74, 86–106, 114–134, 153–173, 177–197, 200–220, and 221–241; these read NSSL…LFGI, VIPG…ISII, IPLI…GVLP, HVIV…IVGF, WLAP…PVSL, LAAN…FIVN, IFFT…EVFV, and AILQ…DAVK.

Belongs to the ATPase A chain family. In terms of assembly, F-type ATPases have 2 components, CF(1) - the catalytic core - and CF(0) - the membrane proton channel. CF(1) has five subunits: alpha(3), beta(3), gamma(1), delta(1), epsilon(1). CF(0) has three main subunits: a(1), b(2) and c(9-12). The alpha and beta chains form an alternating ring which encloses part of the gamma chain. CF(1) is attached to CF(0) by a central stalk formed by the gamma and epsilon chains, while a peripheral stalk is formed by the delta and b chains.

The protein resides in the cell inner membrane. Functionally, key component of the proton channel; it plays a direct role in the translocation of protons across the membrane. This is ATP synthase subunit a from Wolbachia sp. subsp. Drosophila simulans (strain wRi).